The sequence spans 577 residues: Maltase A1 (577 aa).

The first 19 residues, 1–19 (MRPQSAACLLLAIVGFVGA), serve as a signal peptide directing secretion. N-linked (GlcNAc...) asparagine glycans are attached at residues N119 and N151. The Nucleophile role is filled by D221. A glycan (N-linked (GlcNAc...) asparagine) is linked at N244. The active-site Proton donor is the E297. N-linked (GlcNAc...) asparagine glycosylation is found at N315 and N331.

This sequence belongs to the glycosyl hydrolase 13 family.

The catalysed reaction is Hydrolysis of terminal, non-reducing (1-&gt;4)-linked alpha-D-glucose residues with release of alpha-D-glucose.. This Drosophila melanogaster (Fruit fly) protein is Maltase A1 (Mal-A1).